The chain runs to 270 residues: Diaminopimelate epimerase (270 aa).

Positions 15, 49, and 66 each coordinate substrate. The active-site Proton donor is the Cys-75. Substrate is bound by residues 76-77 (GN), Asn-155, Asn-187, and 204-205 (ER). Cys-213 functions as the Proton acceptor in the catalytic mechanism. 214 to 215 (GS) contributes to the substrate binding site.

The protein belongs to the diaminopimelate epimerase family. As to quaternary structure, homodimer.

Its subcellular location is the cytoplasm. The catalysed reaction is (2S,6S)-2,6-diaminopimelate = meso-2,6-diaminopimelate. The protein operates within amino-acid biosynthesis; L-lysine biosynthesis via DAP pathway; DL-2,6-diaminopimelate from LL-2,6-diaminopimelate: step 1/1. In terms of biological role, catalyzes the stereoinversion of LL-2,6-diaminopimelate (L,L-DAP) to meso-diaminopimelate (meso-DAP), a precursor of L-lysine and an essential component of the bacterial peptidoglycan. The sequence is that of Diaminopimelate epimerase from Rickettsia felis (strain ATCC VR-1525 / URRWXCal2) (Rickettsia azadi).